The sequence spans 336 residues: MQDQEEERMITNQPKEEDLILENGLRPKFLVDYIGQNSVKERLKIFIEAAKQRQEPLDHVLLYGPPGLGKTTLANIIANEMNVNIKITSGPAIERPGDLAAILTNLAANDVLFIDEIHRLNRTVEEVLYPAMEDFALDIIIGKGPSARSIRLDLSQFTLIGATTRAGQLSSPLRDRFGVICKLELYNNKQLTAIVKRSARILDAYIDDEGATEIASRSRGTPRIANRLLRRVRDYAQVKSDGRITKRVAEEALILLEVDSLGLDNTDKKMIETMIYNFNGGPVGLDTLAATTGEERNTIEDVYEPYLLQMGFINRTPRGRIVMQKAYEHFNIPSAE.

The tract at residues 2-186 (QDQEEERMIT…FGVICKLELY (185 aa)) is large ATPase domain (RuvB-L). ATP contacts are provided by residues L25, R26, G67, K70, T71, T72, 133–135 (EDF), R176, Y186, and R223. T71 contacts Mg(2+). The segment at 187–257 (NNKQLTAIVK…VAEEALILLE (71 aa)) is small ATPAse domain (RuvB-S). The interval 260 to 336 (SLGLDNTDKK…YEHFNIPSAE (77 aa)) is head domain (RuvB-H). 3 residues coordinate DNA: R296, R315, and R320.

It belongs to the RuvB family. In terms of assembly, homohexamer. Forms an RuvA(8)-RuvB(12)-Holliday junction (HJ) complex. HJ DNA is sandwiched between 2 RuvA tetramers; dsDNA enters through RuvA and exits via RuvB. An RuvB hexamer assembles on each DNA strand where it exits the tetramer. Each RuvB hexamer is contacted by two RuvA subunits (via domain III) on 2 adjacent RuvB subunits; this complex drives branch migration. In the full resolvosome a probable DNA-RuvA(4)-RuvB(12)-RuvC(2) complex forms which resolves the HJ.

The protein resides in the cytoplasm. The catalysed reaction is ATP + H2O = ADP + phosphate + H(+). The RuvA-RuvB-RuvC complex processes Holliday junction (HJ) DNA during genetic recombination and DNA repair, while the RuvA-RuvB complex plays an important role in the rescue of blocked DNA replication forks via replication fork reversal (RFR). RuvA specifically binds to HJ cruciform DNA, conferring on it an open structure. The RuvB hexamer acts as an ATP-dependent pump, pulling dsDNA into and through the RuvAB complex. RuvB forms 2 homohexamers on either side of HJ DNA bound by 1 or 2 RuvA tetramers; 4 subunits per hexamer contact DNA at a time. Coordinated motions by a converter formed by DNA-disengaged RuvB subunits stimulates ATP hydrolysis and nucleotide exchange. Immobilization of the converter enables RuvB to convert the ATP-contained energy into a lever motion, pulling 2 nucleotides of DNA out of the RuvA tetramer per ATP hydrolyzed, thus driving DNA branch migration. The RuvB motors rotate together with the DNA substrate, which together with the progressing nucleotide cycle form the mechanistic basis for DNA recombination by continuous HJ branch migration. Branch migration allows RuvC to scan DNA until it finds its consensus sequence, where it cleaves and resolves cruciform DNA. This is Holliday junction branch migration complex subunit RuvB from Alkaliphilus metalliredigens (strain QYMF).